Reading from the N-terminus, the 184-residue chain is ATP synthase subunit delta (184 aa).

The protein belongs to the ATPase delta chain family. F-type ATPases have 2 components, F(1) - the catalytic core - and F(0) - the membrane proton channel. F(1) has five subunits: alpha(3), beta(3), gamma(1), delta(1), epsilon(1). F(0) has three main subunits: a(1), b(2) and c(10-14). The alpha and beta chains form an alternating ring which encloses part of the gamma chain. F(1) is attached to F(0) by a central stalk formed by the gamma and epsilon chains, while a peripheral stalk is formed by the delta and b chains.

Its subcellular location is the cell inner membrane. Functionally, f(1)F(0) ATP synthase produces ATP from ADP in the presence of a proton or sodium gradient. F-type ATPases consist of two structural domains, F(1) containing the extramembraneous catalytic core and F(0) containing the membrane proton channel, linked together by a central stalk and a peripheral stalk. During catalysis, ATP synthesis in the catalytic domain of F(1) is coupled via a rotary mechanism of the central stalk subunits to proton translocation. This protein is part of the stalk that links CF(0) to CF(1). It either transmits conformational changes from CF(0) to CF(1) or is implicated in proton conduction. The chain is ATP synthase subunit delta from Zymomonas mobilis subsp. mobilis (strain ATCC 31821 / ZM4 / CP4).